Reading from the N-terminus, the 669-residue chain is Pre-mRNA-processing factor 39 (669 aa).

Over residues 1 to 10 the composition is skewed to basic and acidic residues; that stretch reads MQNSHMDEYR. Residues 1–23 are disordered; the sequence is MQNSHMDEYRNSSNGSTGNSSEV. The span at 11–23 shows a compositional bias: low complexity; sequence NSSNGSTGNSSEV. Residue Ser44 is modified to Phosphoserine. HAT repeat units lie at residues 109–141, 143–175, 183–218, 220–253, 333–365, 367–399, and 404–436; these read NHLM…LEKR, DNIK…FLKE, ETNN…WENE, GNLR…HVQN, TFEE…FEIE, GTHE…YMEN, and GVRH…QQGN. Residues 599-624 show a composition bias toward basic and acidic residues; sequence KEQDSLKRKAENGSEEPEEKKAHTED. Positions 599-634 are disordered; that stretch reads KEQDSLKRKAENGSEEPEEKKAHTEDTTSSSTQMID. Positions 625-634 are enriched in polar residues; it reads TTSSSTQMID.

This sequence belongs to the PRP39 family.

It is found in the nucleus. Its function is as follows. Involved in pre-mRNA splicing. The protein is Pre-mRNA-processing factor 39 (PRPF39) of Homo sapiens (Human).